Consider the following 361-residue polypeptide: 3-dehydroquinate synthase (361 aa).

NAD(+)-binding positions include 73–78, 107–111, 131–132, lysine 144, lysine 153, and 171–174; these read DAEAGK, GAATD, TT, and TLET. Zn(2+) contacts are provided by glutamate 186, histidine 249, and histidine 265.

The protein belongs to the sugar phosphate cyclases superfamily. Dehydroquinate synthase family. NAD(+) is required as a cofactor. The cofactor is Co(2+). Requires Zn(2+) as cofactor.

The protein localises to the cytoplasm. It catalyses the reaction 7-phospho-2-dehydro-3-deoxy-D-arabino-heptonate = 3-dehydroquinate + phosphate. It functions in the pathway metabolic intermediate biosynthesis; chorismate biosynthesis; chorismate from D-erythrose 4-phosphate and phosphoenolpyruvate: step 2/7. Functionally, catalyzes the conversion of 3-deoxy-D-arabino-heptulosonate 7-phosphate (DAHP) to dehydroquinate (DHQ). The polypeptide is 3-dehydroquinate synthase (Mycobacterium leprae (strain TN)).